A 165-amino-acid polypeptide reads, in one-letter code: Protein AIG2 C (165 aa).

Substrate is bound at residue 14–19 (YGSILE). The active-site Proton acceptor is the E82.

This sequence belongs to the gamma-glutamylcyclotransferase family. In terms of tissue distribution, expressed in floral organs, leaves, stems and roots.

In terms of biological role, putative gamma-glutamylcyclotransferase. This chain is Protein AIG2 C, found in Arabidopsis thaliana (Mouse-ear cress).